Here is a 139-residue protein sequence, read N- to C-terminus: Aspartate 1-decarboxylase (139 aa).

Serine 25 serves as the catalytic Schiff-base intermediate with substrate; via pyruvic acid. Serine 25 carries the pyruvic acid (Ser) modification. A substrate-binding site is contributed by threonine 57. Residue tyrosine 58 is the Proton donor of the active site. Residue 73–75 (GAA) coordinates substrate.

The protein belongs to the PanD family. Heterooctamer of four alpha and four beta subunits. Requires pyruvate as cofactor. In terms of processing, is synthesized initially as an inactive proenzyme, which is activated by self-cleavage at a specific serine bond to produce a beta-subunit with a hydroxyl group at its C-terminus and an alpha-subunit with a pyruvoyl group at its N-terminus.

It localises to the cytoplasm. It carries out the reaction L-aspartate + H(+) = beta-alanine + CO2. Its pathway is cofactor biosynthesis; (R)-pantothenate biosynthesis; beta-alanine from L-aspartate: step 1/1. In terms of biological role, catalyzes the pyruvoyl-dependent decarboxylation of aspartate to produce beta-alanine. The polypeptide is Aspartate 1-decarboxylase (Mycobacterium bovis (strain BCG / Tokyo 172 / ATCC 35737 / TMC 1019)).